A 311-amino-acid chain; its full sequence is Olfactory receptor 10G4 (311 aa).

At methionine 1 to alanine 23 the chain is on the extracellular side. Residue asparagine 3 is glycosylated (N-linked (GlcNAc...) asparagine). Residues leucine 24 to leucine 44 traverse the membrane as a helical segment. At leucine 45–histidine 52 the chain is on the cytoplasmic side. A helical membrane pass occupies residues leucine 53 to threonine 73. The Extracellular portion of the chain corresponds to valine 74–alanine 98. A disulfide bridge links cysteine 96 with cysteine 188. Residues glutamine 99–tyrosine 119 form a helical membrane-spanning segment. The Cytoplasmic segment spans residues aspartate 120 to serine 138. The helical transmembrane segment at arginine 139–threonine 159 threads the bilayer. At isoleucine 160–methionine 196 the chain is on the extracellular side. A helical membrane pass occupies residues valine 197–serine 216. Residues tyrosine 217–alanine 236 are Cytoplasmic-facing. A helical transmembrane segment spans residues phenylalanine 237–isoleucine 257. The Extracellular segment spans residues tyrosine 258–aspartate 268. A helical membrane pass occupies residues glycine 269–leucine 289. The Cytoplasmic portion of the chain corresponds to arginine 290–lysine 311.

The protein belongs to the G-protein coupled receptor 1 family.

Its subcellular location is the cell membrane. In terms of biological role, odorant receptor. This chain is Olfactory receptor 10G4 (OR10G4), found in Homo sapiens (Human).